The primary structure comprises 1029 residues: Serine/threonine-protein kinase KSP1 (1029 aa).

The region spanning Y18–T351 is the Protein kinase domain. Residues G27–A35 and K47 each bind ATP. The segment covering G56–T79 has biased composition (acidic residues). The interval G56 to H105 is disordered. Residues K80–E89 show a composition bias toward basic and acidic residues. Low complexity predominate over residues N90–S99. The Proton acceptor role is filled by D207. The interval V377 to H397 is disordered. 2 positions are modified to phosphoserine: S416 and S419. Phosphothreonine is present on residues T501, T504, and T526. S529 is modified (phosphoserine). The segment at H532–F570 is disordered. The span at F538–F570 shows a compositional bias: low complexity. S646 carries the post-translational modification Phosphoserine. A disordered region spans residues S732–R824. Low complexity predominate over residues N734–H743. Residues I744–H754 are compositionally biased toward polar residues. Residues H813–R824 are compositionally biased toward basic and acidic residues. 2 positions are modified to phosphoserine: S845 and S884. A disordered region spans residues E949–Q978. Residues E953–G964 are compositionally biased toward basic and acidic residues. At T1005 the chain carries Phosphothreonine. Position 1014 is a phosphoserine (S1014).

This sequence belongs to the protein kinase superfamily. Ser/Thr protein kinase family. CK2 subfamily. In terms of processing, phosphorylated by PKA in a TORC1-dependent manner. Phosphorylation at PKA consensus sites RRxS/T decreases upon rapamycin treatment.

Its subcellular location is the nucleus. It catalyses the reaction L-seryl-[protein] + ATP = O-phospho-L-seryl-[protein] + ADP + H(+). The enzyme catalyses L-threonyl-[protein] + ATP = O-phospho-L-threonyl-[protein] + ADP + H(+). May act on PRP20. This chain is Serine/threonine-protein kinase KSP1 (KSP1), found in Saccharomyces cerevisiae (strain ATCC 204508 / S288c) (Baker's yeast).